A 479-amino-acid chain; its full sequence is Phosphoglycerate kinase, glycosomal (479 aa).

Residues Val-23, Asp-24, Phe-25, Asn-26, Arg-39, Ser-61, His-62, Gly-64, Arg-65, Arg-132, His-168, and Arg-169 each coordinate (2R)-3-phosphoglycerate. Residues Gly-214 and Ala-215 each coordinate ADP. Gly-214 is a binding site for CDP. AMP contacts are provided by Ala-215 and Lys-216. Ala-215 contributes to the ATP binding site. A Mg(2+)-binding site is contributed by Ala-215. A (2R)-3-phosphoglycerate-binding site is contributed by Lys-216. Asp-219 lines the CDP pocket. A Mg(2+)-binding site is contributed by Asp-219. Lys-220 and Gly-238 together coordinate ADP. Residue Lys-220 coordinates AMP. Position 220 (Lys-220) interacts with ATP. Gly-238 serves as a coordination point for CDP. Residues Ala-239 and Ala-311 each coordinate AMP. ATP-binding residues include Ala-239 and Ala-311. ADP is bound by residues Ala-311 and Asn-335. CDP contacts are provided by Gly-336 and Phe-341. ADP is bound by residues Phe-341, Glu-342, Asp-374, and Ser-375. Glu-342 contributes to the AMP binding site. Positions 342, 374, and 375 each coordinate ATP. Asp-374 contacts Mg(2+).

The protein belongs to the phosphoglycerate kinase family. As to quaternary structure, monomer. It depends on Mg(2+) as a cofactor.

Its subcellular location is the glycosome. It carries out the reaction (2R)-3-phosphoglycerate + ATP = (2R)-3-phospho-glyceroyl phosphate + ADP. Its pathway is carbohydrate degradation; glycolysis; pyruvate from D-glyceraldehyde 3-phosphate: step 2/5. The protein is Phosphoglycerate kinase, glycosomal (PGKC) of Leishmania major.